The sequence spans 368 residues: MKAIVVKPPNPGVEIKDVKDDENKLSNIGLVKVKILENGICGTDREIVSGKRTSVKPPIGKDELILGHEAIGIVEVGGYGFKEGELVMPINKRGCGKCLNCLIGRPDFCETGEGLVAGTKGLDGFMREYLYDDPKYLVKIPPAIKDIAILAQPLADIEKSVESILTSQKRIPIWTCDDGTLNCRKALVVGTGPTGILFSLVLRTYGFQVWIANRRELLDNEKEILDEPRILFYNSAKGYESLVKDVDKFDLIIDTTGASASIIQELVPLLQINGVLGLFGFPRYDNFSLDYKIVQDFVINNRIIIGLDNGQKPHFQQALIHLASWKSLWPKTASKMITKIISINDEREVISSLREKLPGEIKVKIVWE.

Cys41 lines the Zn(2+) pocket. Thr43 is a binding site for substrate. Zn(2+) contacts are provided by His68 and Glu69. Asn91 contributes to the substrate binding site. Positions 95, 98, 101, 109, and 152 each coordinate Zn(2+). Residues Gln152 and Asp156 each contribute to the substrate site. NADP(+) contacts are provided by residues 213–215, 279–281, 307–309, and Lys356; these read NRR, FGF, and LDN. Asn309 contributes to the substrate binding site.

This sequence belongs to the zinc-containing alcohol dehydrogenase family. Glucose 1-dehydrogenase subfamily. Requires Zn(2+) as cofactor.

It catalyses the reaction D-glucose + NAD(+) = D-glucono-1,5-lactone + NADH + H(+). The enzyme catalyses D-glucose + NADP(+) = D-glucono-1,5-lactone + NADPH + H(+). Functionally, catalyzes the NAD(P)(+)-dependent oxidation of D-glucose to D-gluconate via gluconolactone. Can utilize both NAD(+) and NADP(+) as electron acceptor. Is involved in the degradation of glucose through a non-phosphorylative variant of the Entner-Doudoroff pathway. The protein is Glucose 1-dehydrogenase 2 of Saccharolobus solfataricus (strain ATCC 35092 / DSM 1617 / JCM 11322 / P2) (Sulfolobus solfataricus).